Reading from the N-terminus, the 1246-residue chain is MSKLLDRFRYFKQKGETFADGHGQVMHSNRDWEDSYRQRWQFDKIVRSTHGVNCTGSCSWKIYVKNGLVTWEIQQTDYPRTRPDLPNHEPRGCPRGASYSWYLYSANRLKYPLIRKRLIELWREALKQHSDPVLAWASIMNDPQKCLSYKQVRGRGGFIRSNWQELNQLIAAANVWTIKTYGPDRVAGFSPIPAMSMVSYAAGTRYLSLLGGTCLSFYDWYCDLPPASPMTWGEQTDVPESADWYNSSYIIAWGSNVPQTRTPDAHFFTEVRYKGTKTIAITPDYSEVAKLCDQWLAPKQGTDSALAMAMGHVILKEFHLDNPSDYFINYCRRYSDMPMLVMLEPRDDGSYVPGRMIRASDLVDGLGESNNPQWKTVAVNTAGELVVPNGSIGFRWGEKGKWNLESIAAGTETELSLTLLGQHDAVAGVAFPYFGGIENPHFRSVKHNPVLVRQLPVKNLTLVDGNTCPVVSVYDLVLANYGLDRGLEDENSAKDYAEIKPYTPAWGEQITGVPRQYIETIAREFADTAHKTHGRSMIILGAGVNHWYHMDMNYRGMINMLIFCGCVGQSGGGWAHYVGQEKLRPQTGWLPLAFALDWNRPPRQMNSTSFFYNHSSQWRYEKVSAQELLSPLADASKYSGHLIDFNVRAERMGWLPSAPQLGRNPLGIKAEADKAGLSPTEFTAQALKSGDLRMACEQPDSSSNHPRNLFVWRSNLLGSSGKGHEYMQKYLLGTESGIQGEELGASDGIKPEEVEWQTAAIEGKLDLLVTLDFRMSSTCLFSDIVLPTATWYEKDDMNTSDMHPFIHPLSAAVDPAWESRSDWEIYKGIAKAFSQVCVGHLGKETDVVLQPLLHDSPAELSQPCEVLDWRKGECDLIPGKTAPNIVAVERDYPATYERFTSLGPLMDKLGNGGKGISWNTQDEIDFLGKLNYTKRDGPAQGRPLIDTAIDASEVILALAPETNGHVAVKAWQALGEITGREHTHLALHKEDEKIRFRDIQAQPRKIISSPTWSGLESDHVSYNAGYTNVHELIPWRTLSGRQQLYQDHPWMRAFGESLVAYRPPIDTRSVSEMRQIPPNGFPEKALNFLTPHQKWGIHSTYSENLLMLTLSRGGPIVWISETDARELTIVDNDWVEVFNANGALTARAVVSQRVPPGMTMMYHAQERIMNIPGSEVTGMRGGIHNSVTRVCPKPTHMIGGYAQLAWGFNYYGTVGSNRDEFIMIRKMKNVNWLDDEGRDQVQEAKK.

A 4Fe-4S Mo/W bis-MGD-type domain is found at 43-107 (DKIVRSTHGV…SYSWYLYSAN (65 aa)). The [4Fe-4S] cluster site is built by H50, C54, C58, and C93. D223 serves as a coordination point for Mo-bis(molybdopterin guanine dinucleotide).

It belongs to the prokaryotic molybdopterin-containing oxidoreductase family. Tetramer composed of an alpha, a beta and 2 gamma chains. Alpha and beta are catalytic chains; gamma chain is involved in binding the enzyme complex to the cytoplasmic membrane. [4Fe-4S] cluster serves as cofactor. Mo-bis(molybdopterin guanine dinucleotide) is required as a cofactor.

It localises to the cell membrane. The catalysed reaction is nitrate + a quinol = a quinone + nitrite + H2O. This is a second nitrate reductase enzyme which can substitute for the NRA enzyme and allows E.coli to use nitrate as an electron acceptor during anaerobic growth. Functionally, the alpha chain is the actual site of nitrate reduction. In Escherichia coli (strain K12), this protein is Respiratory nitrate reductase 2 alpha chain (narZ).